Here is a 168-residue protein sequence, read N- to C-terminus: MAFNFGHLLIAGLVALSAVSSETIQLQPTQGILIPAPLAENIRVSRAAYGGYGAAPAAPSYSAPAAPAAQAYSAPAAPAYSAPAAPAYSAPAAPAYSAPAAPAYSAPAAPAYSAPASIPSPPCPKNYLFSCQPSLQPVPCSAPAQSYGSAGAYSQYVPQYAVPFVREL.

Positions 1-23 (MAFNFGHLLIAGLVALSAVSSET) are cleaved as a signal peptide. The propeptide at 24–42 (IQLQPTQGILIPAPLAENI) is removed between stage 11 and 14 of oogenesis. The segment at 43-46 (RVSR) is essential for N-terminal propeptide removal. Potential serine protease cleavage site. The interval 52–119 (YGAAPAAPSY…PAYSAPASIP (68 aa)) is 8 X 8 AA approximate repeats of P-[AS]-Y-S-A-P-A-[AS]. A 1; half-length repeat occupies 55 to 58 (APAA). Repeat 2 spans residues 59 to 66 (PSYSAPAA). One copy of the 3; approximate repeat lies at 70 to 77 (QAYSAPAA). 5 tandem repeats follow at residues 78 to 85 (PAYSAPAA), 86 to 93 (PAYSAPAA), 94 to 101 (PAYSAPAA), 102 to 109 (PAYSAPAA), and 110 to 117 (PAYSAPAS). The 38-residue stretch at 117 to 154 (SIPSPPCPKNYLFSCQPSLQPVPCSAPAQSYGSAGAYS) folds into the VM domain. Positions 155–168 (QYVPQYAVPFVREL) are cleaved as a propeptide — removed between stage 9 and 12 of oogenesis.

The protein belongs to the vitelline membrane protein family. As to quaternary structure, interacts with vml and Vm26Aa; forms part of a disulfide-linked network within the vitelline membrane of stage 10 egg chambers. Post-translationally, proteolytically processed after secretion into the perivitelline space. Undergoes several proteolytic processing steps during formation of the vitelline membrane; an initial processing step removing a C-terminal propeptide occurs between stage 9 and 12 of oogenesis while a second removing a N-terminal propeptide occurs between stage 11 and 14. Becomes part of a disulfide-linked network including other vitelline membrane proteins, including vml and Vm26Aa, during vitelline membrane biogenesis and maturation. Cys-123, Cys-131 and Cys-140 are involved in disulfide network formation, with Cys-131 being the most important. Undergoes both disulfide and non-disulfide cross-linking upon incorporation into the vitelline membrane. Follicle cells.

It is found in the secreted. Its subcellular location is the extracellular space. The protein resides in the extracellular matrix. Major early eggshell protein secreted by follicle cells into the perivitelline space and incorporated into the vitelline membrane. Involved in vitelline membrane biogenesis; forms a cross-linked network with other vitelline membrane components. This chain is Vitelline membrane protein Vm26Ab, found in Drosophila melanogaster (Fruit fly).